Consider the following 379-residue polypeptide: Cytochrome b (379 aa).

4 helical membrane passes run 34–54 (FGSLLGICLITQILTGLLLAM), 78–99 (WLIRNLHANGASFFFICIYLHI), 114–134 (WNTGVILLLTLMATAFVGYVL), and 179–199 (FFALHFLLPFLIAGITIIHLT). Heme b-binding residues include H84 and H98. Heme b is bound by residues H183 and H197. H202 is an a ubiquinone binding site. Transmembrane regions (helical) follow at residues 227 to 247 (LKDILGFTLMFIPLLILAFFS), 289 to 309 (LGGVLALAASVLILFLIPFLH), 321 to 341 (LSQMLFWLLVANLLILTWIGS), and 348 to 368 (FIIIGQTASFTYFLILLILFP).

It belongs to the cytochrome b family. The cytochrome bc1 complex contains 11 subunits: 3 respiratory subunits (MT-CYB, CYC1 and UQCRFS1), 2 core proteins (UQCRC1 and UQCRC2) and 6 low-molecular weight proteins (UQCRH/QCR6, UQCRB/QCR7, UQCRQ/QCR8, UQCR10/QCR9, UQCR11/QCR10 and a cleavage product of UQCRFS1). This cytochrome bc1 complex then forms a dimer. Heme b serves as cofactor.

It localises to the mitochondrion inner membrane. Component of the ubiquinol-cytochrome c reductase complex (complex III or cytochrome b-c1 complex) that is part of the mitochondrial respiratory chain. The b-c1 complex mediates electron transfer from ubiquinol to cytochrome c. Contributes to the generation of a proton gradient across the mitochondrial membrane that is then used for ATP synthesis. This chain is Cytochrome b (MT-CYB), found in Dromaius novaehollandiae (Emu).